A 264-amino-acid chain; its full sequence is S-adenosylmethionine decarboxylase proenzyme (264 aa).

The active-site Schiff-base intermediate with substrate; via pyruvic acid is Ser-113. Ser-113 is subject to Pyruvic acid (Ser); by autocatalysis. Catalysis depends on His-118, which acts as the Proton acceptor; for processing activity. Cys-141 serves as the catalytic Proton donor; for catalytic activity.

This sequence belongs to the prokaryotic AdoMetDC family. Type 2 subfamily. Heterooctamer of four alpha and four beta chains arranged as a tetramer of alpha/beta heterodimers. Pyruvate serves as cofactor. Is synthesized initially as an inactive proenzyme. Formation of the active enzyme involves a self-maturation process in which the active site pyruvoyl group is generated from an internal serine residue via an autocatalytic post-translational modification. Two non-identical subunits are generated from the proenzyme in this reaction, and the pyruvate is formed at the N-terminus of the alpha chain, which is derived from the carboxyl end of the proenzyme. The post-translation cleavage follows an unusual pathway, termed non-hydrolytic serinolysis, in which the side chain hydroxyl group of the serine supplies its oxygen atom to form the C-terminus of the beta chain, while the remainder of the serine residue undergoes an oxidative deamination to produce ammonia and the pyruvoyl group blocking the N-terminus of the alpha chain.

It carries out the reaction S-adenosyl-L-methionine + H(+) = S-adenosyl 3-(methylsulfanyl)propylamine + CO2. It functions in the pathway amine and polyamine biosynthesis; S-adenosylmethioninamine biosynthesis; S-adenosylmethioninamine from S-adenosyl-L-methionine: step 1/1. Functionally, catalyzes the decarboxylation of S-adenosylmethionine to S-adenosylmethioninamine (dcAdoMet), the propylamine donor required for the synthesis of the polyamines spermine and spermidine from the diamine putrescine. The sequence is that of S-adenosylmethionine decarboxylase proenzyme from Stenotrophomonas maltophilia (strain K279a).